Here is a 578-residue protein sequence, read N- to C-terminus: Acyl-CoA ligase AKT1 (578 aa).

ATP-binding positions include 210 to 218 (SSGTSGAQK), 350 to 355 (QCYGAT), Asp-438, Arg-457, and Lys-554. The tract at residues 281–350 (DVEDLLSIVE…RHHPTWKTKQ (70 aa)) is SBD1. The tract at residues 351–413 (CYGATEAGTA…VSSPSLAIGY (63 aa)) is SBD2. The Peroxisomal targeting signal type 1 signature appears at 576–578 (SKI).

Its subcellular location is the peroxisome. It participates in mycotoxin biosynthesis. In terms of biological role, acyl-CoA ligase; part of the gene clusters that mediate the biosynthesis of the host-selective toxins (HSTs) AK-toxins responsible for Japanese pear black spot disease by the Japanese pear pathotype. AK-toxins are esters of 9,10-epoxy 8-hydroxy 9-methyldecatrienoic acid (EDA). On cellular level, AK-toxins affect plasma membrane of susceptible cells and cause a sudden increase in loss of K(+) after a few minutes of toxin treatment. The acyl-CoA ligase AKT1, the hydrolase AKT2 and enoyl-CoA hydratase AKT3 are all involved in the biosynthesis of the AK-, AF- and ACT-toxin common 9,10-epoxy-8-hydroxy-9-methyl-decatrienoic acid (EDA) structural moiety. Part of the EDA biosynthesis occurs in the peroxisome since these 3 enzymes are localized in peroxisomes. The exact roles of the 3 enzymes, as well as of additional AK-toxin clusters enzymes, including AKT4, AKT6 and AKTS1, have still to be elucidated. The Cytochrome P450 monooxygenase AKT7 on the other side functions to limit production of EDA and AK-toxin, probably via the catalysis of a side reaction of EDA or its precursor. The polypeptide is Acyl-CoA ligase AKT1 (Alternaria alternata (Alternaria rot fungus)).